We begin with the raw amino-acid sequence, 684 residues long: uncharacterized protein (684 aa).

Disordered stretches follow at residues 267-353 (MGAR…TCTD) and 388-449 (SVAS…AERE). Residues 316–326 (GMTSAKASTSY) show a composition bias toward polar residues. Residues 438 to 449 (RPTEARRRAERE) show a composition bias toward basic and acidic residues.

This is an uncharacterized protein from Colorado tick fever virus (strain USA/Florio N-7180) (CTFV).